The sequence spans 161 residues: Endoribonuclease YbeY (161 aa).

His121, His125, and His131 together coordinate Zn(2+).

Belongs to the endoribonuclease YbeY family. It depends on Zn(2+) as a cofactor.

Its subcellular location is the cytoplasm. In terms of biological role, single strand-specific metallo-endoribonuclease involved in late-stage 70S ribosome quality control and in maturation of the 3' terminus of the 16S rRNA. In Xanthomonas axonopodis pv. citri (strain 306), this protein is Endoribonuclease YbeY.